Here is a 115-residue protein sequence, read N- to C-terminus: Pro-neuregulin-4, membrane-bound isoform (115 aa).

Topologically, residues 1-62 (MPTDHEEPCG…SSIQTKSNLF (62 aa)) are extracellular. Positions 5–46 (HEEPCGPSHKSFCLNGGLCYVIPTIPSPFCRCVENYTGARCE) constitute an EGF-like domain. Disulfide bonds link Cys9–Cys23, Cys17–Cys34, and Cys36–Cys45. N-linked (GlcNAc...) asparagine glycosylation occurs at Asn39. A helical membrane pass occupies residues 63–83 (EAFVALAVLVTLIIGAFYFLC). Residues 84–115 (RKGHFQRASSVQYDINLVETSSTSAHHSHEQH) lie on the Cytoplasmic side of the membrane.

This sequence belongs to the neuregulin family. Interacts with ERBB4. Proteolytic cleavage close to the plasma membrane on the external face leads to the release of the soluble growth factor form. In terms of processing, extensive glycosylation precedes the proteolytic cleavage.

It localises to the cell membrane. The protein localises to the secreted. Functionally, low affinity ligand for the ERBB4 tyrosine kinase receptor. Concomitantly recruits ERBB1 and ERBB2 coreceptors, resulting in ligand-stimulated tyrosine phosphorylation and activation of the ERBB receptors. Does not bind to the ERBB1, ERBB2 and ERBB3 receptors. In Homo sapiens (Human), this protein is Pro-neuregulin-4, membrane-bound isoform (NRG4).